A 481-amino-acid chain; its full sequence is Glycogen synthase (481 aa).

Residue lysine 16 participates in ADP-alpha-D-glucose binding.

This sequence belongs to the glycosyltransferase 1 family. Bacterial/plant glycogen synthase subfamily.

It catalyses the reaction [(1-&gt;4)-alpha-D-glucosyl](n) + ADP-alpha-D-glucose = [(1-&gt;4)-alpha-D-glucosyl](n+1) + ADP + H(+). The protein operates within glycan biosynthesis; glycogen biosynthesis. In terms of biological role, synthesizes alpha-1,4-glucan chains using ADP-glucose. The polypeptide is Glycogen synthase (Cellvibrio japonicus (strain Ueda107) (Pseudomonas fluorescens subsp. cellulosa)).